Here is a 248-residue protein sequence, read N- to C-terminus: Homeobox protein Hox-A4 (248 aa).

Positions 23–107 are disordered; the sequence is YQQSGYIPNP…PDGGAGANAS (85 aa). The segment covering 35–51 has biased composition (basic and acidic residues); sequence YYERPKDTGFPHHDEPS. The Antp-type hexapeptide motif lies at 128-133; the sequence is VYPWMK. Residues 149-208 constitute a DNA-binding region (homeobox); the sequence is PKRSRTAYTRQQALELEKEFHFNRYLTRRRRVEIAHTMCLSERQVKIWFQNRRMKWKKEH. Positions 207–248 are disordered; it reads EHKLPNTKIRSSSSASSSASGAQQQQIKTGQQLVPTPCTAGL. A compositionally biased stretch (low complexity) spans 217-238; the sequence is SSSSASSSASGAQQQQIKTGQQ.

The protein belongs to the Antp homeobox family. Deformed subfamily.

The protein localises to the nucleus. Sequence-specific transcription factor which is part of a developmental regulatory system that provides cells with specific positional identities on the anterior-posterior axis. The sequence is that of Homeobox protein Hox-A4 (hoxa4) from Morone saxatilis (Striped bass).